We begin with the raw amino-acid sequence, 131 residues long: Large ribosomal subunit protein bL17 (131 aa).

The protein belongs to the bacterial ribosomal protein bL17 family. In terms of assembly, part of the 50S ribosomal subunit. Contacts protein L32.

This is Large ribosomal subunit protein bL17 from Shewanella sp. (strain ANA-3).